Reading from the N-terminus, the 346-residue chain is Phenylalanine--tRNA ligase alpha subunit (346 aa).

Glu262 contributes to the Mg(2+) binding site.

This sequence belongs to the class-II aminoacyl-tRNA synthetase family. Phe-tRNA synthetase alpha subunit type 1 subfamily. In terms of assembly, tetramer of two alpha and two beta subunits. Requires Mg(2+) as cofactor.

It is found in the cytoplasm. The catalysed reaction is tRNA(Phe) + L-phenylalanine + ATP = L-phenylalanyl-tRNA(Phe) + AMP + diphosphate + H(+). This is Phenylalanine--tRNA ligase alpha subunit from Ehrlichia chaffeensis (strain ATCC CRL-10679 / Arkansas).